The chain runs to 308 residues: 11-beta-hydroxysteroid dehydrogenase-like 2 (308 aa).

The chain crosses the membrane as a helical; Signal-anchor for type II membrane protein span at residues 10 to 30 (FLLPPLTISFLVLFYPFYLFT). NADP(+) contacts are provided by residues 53–79 (GASS…VARR) and Asp-104. Residue Ser-183 coordinates substrate. Tyr-196 acts as the Proton acceptor in catalysis. NADP(+) contacts are provided by residues 196 to 200 (YSASK) and Lys-200.

This sequence belongs to the short-chain dehydrogenases/reductases (SDR) family.

Its subcellular location is the membrane. The protein is 11-beta-hydroxysteroid dehydrogenase-like 2 (HSD2) of Arabidopsis thaliana (Mouse-ear cress).